The following is a 480-amino-acid chain: Serine carboxypeptidase-like 35 (480 aa).

The first 20 residues, 1–20 (MKKNALWLLCILVLPAIACG), serve as a signal peptide directing secretion. 2 N-linked (GlcNAc...) asparagine glycosylation sites follow: Asn79 and Asn146. 3 disulfides stabilise this stretch: Cys95–Cys363, Cys257–Cys270, and Cys294–Cys331. Ser188 is an active-site residue. Asn265 carries N-linked (GlcNAc...) asparagine glycosylation. Asn352 carries N-linked (GlcNAc...) asparagine glycosylation. Active-site residues include Asp399 and His452.

The protein belongs to the peptidase S10 family. Expressed in seedlings, flowers and siliques.

The protein resides in the secreted. In terms of biological role, probable carboxypeptidase. This Arabidopsis thaliana (Mouse-ear cress) protein is Serine carboxypeptidase-like 35 (SCPL35).